The sequence spans 290 residues: 33 kDa chaperonin (290 aa).

2 disulfide bridges follow: cysteine 235-cysteine 237 and cysteine 268-cysteine 271.

This sequence belongs to the HSP33 family. Under oxidizing conditions two disulfide bonds are formed involving the reactive cysteines. Under reducing conditions zinc is bound to the reactive cysteines and the protein is inactive.

It localises to the cytoplasm. Its function is as follows. Redox regulated molecular chaperone. Protects both thermally unfolding and oxidatively damaged proteins from irreversible aggregation. Plays an important role in the bacterial defense system toward oxidative stress. This Streptococcus pyogenes serotype M4 (strain MGAS10750) protein is 33 kDa chaperonin.